Consider the following 127-residue polypeptide: Fluoride-specific ion channel FluC (127 aa).

A run of 4 helical transmembrane segments spans residues 4-24, 35-55, 71-91, and 103-123; these read LLLA…LLSM, LGTL…FAWF, TGFC…VFLL, and VFVN…LFSA. The Na(+) site is built by Gly75 and Thr78.

The protein belongs to the fluoride channel Fluc/FEX (TC 1.A.43) family.

It is found in the cell inner membrane. It carries out the reaction fluoride(in) = fluoride(out). Na(+) is not transported, but it plays an essential structural role and its presence is essential for fluoride channel function. In terms of biological role, fluoride-specific ion channel. Important for reducing fluoride concentration in the cell, thus reducing its toxicity. The polypeptide is Fluoride-specific ion channel FluC (Escherichia coli O7:K1 (strain IAI39 / ExPEC)).